We begin with the raw amino-acid sequence, 308 residues long: Homoserine kinase (308 aa).

Position 94-104 (94-104 (PLARGLGSSAT)) interacts with ATP.

This sequence belongs to the GHMP kinase family. Homoserine kinase subfamily.

It localises to the cytoplasm. It catalyses the reaction L-homoserine + ATP = O-phospho-L-homoserine + ADP + H(+). Its pathway is amino-acid biosynthesis; L-threonine biosynthesis; L-threonine from L-aspartate: step 4/5. In terms of biological role, catalyzes the ATP-dependent phosphorylation of L-homoserine to L-homoserine phosphate. The polypeptide is Homoserine kinase (Crocosphaera subtropica (strain ATCC 51142 / BH68) (Cyanothece sp. (strain ATCC 51142))).